Consider the following 154-residue polypeptide: 6,7-dimethyl-8-ribityllumazine synthase (154 aa).

5-amino-6-(D-ribitylamino)uracil is bound by residues phenylalanine 26, 60 to 62 (ALE), and 84 to 86 (CII). Position 89–90 (89–90 (QT)) interacts with (2S)-2-hydroxy-3-oxobutyl phosphate. Histidine 92 functions as the Proton donor in the catalytic mechanism. Asparagine 117 provides a ligand contact to 5-amino-6-(D-ribitylamino)uracil. Arginine 131 provides a ligand contact to (2S)-2-hydroxy-3-oxobutyl phosphate.

The protein belongs to the DMRL synthase family.

The enzyme catalyses (2S)-2-hydroxy-3-oxobutyl phosphate + 5-amino-6-(D-ribitylamino)uracil = 6,7-dimethyl-8-(1-D-ribityl)lumazine + phosphate + 2 H2O + H(+). It functions in the pathway cofactor biosynthesis; riboflavin biosynthesis; riboflavin from 2-hydroxy-3-oxobutyl phosphate and 5-amino-6-(D-ribitylamino)uracil: step 1/2. Catalyzes the formation of 6,7-dimethyl-8-ribityllumazine by condensation of 5-amino-6-(D-ribitylamino)uracil with 3,4-dihydroxy-2-butanone 4-phosphate. This is the penultimate step in the biosynthesis of riboflavin. The sequence is that of 6,7-dimethyl-8-ribityllumazine synthase from Verminephrobacter eiseniae (strain EF01-2).